The sequence spans 328 residues: 4-hydroxy-2-oxoglutarate aldolase, mitochondrial (328 aa).

Residues 1 to 26 (MFGRTLFPARVIALGSGLFRTPLRTL) constitute a mitochondrion transit peptide. 76–77 (SN) serves as a coordination point for substrate. Residue K195 is the Schiff-base intermediate with substrate of the active site. Substrate is bound by residues S197 and G221.

This sequence belongs to the DapA family. In terms of assembly, homotetramer.

The protein resides in the mitochondrion. It carries out the reaction (4S)-4-hydroxy-2-oxoglutarate = glyoxylate + pyruvate. The enzyme catalyses (4R)-4-hydroxy-2-oxoglutarate = glyoxylate + pyruvate. Its activity is regulated as follows. Inhibited by divalent cations. Its function is as follows. Catalyzes the final step in the metabolic pathway of hydroxyproline. The protein is 4-hydroxy-2-oxoglutarate aldolase, mitochondrial (hoga1) of Xenopus tropicalis (Western clawed frog).